Here is a 248-residue protein sequence, read N- to C-terminus: Transcription factor cicD (248 aa).

Basic and acidic residues predominate over residues 1-22 (MVGSRHPDQCAKRWHHSLDPNV). Positions 1–25 (MVGSRHPDQCAKRWHHSLDPNVKRG) are disordered. Positions 19 to 74 (DPNVKRGPWTMEEDSSLLEAVQKIGRDWKEIGRELFPSRSTTDIKNRYVILSRRRG) constitute an HTH myb-type domain. Positions 46-70 (WKEIGRELFPSRSTTDIKNRYVILS) form a DNA-binding region, H-T-H motif. The tract at residues 186–208 (SELEGSFTSRNHEEPPQPLPVPD) is disordered.

It localises to the nucleus. Its function is as follows. Transcription factor that regulates the expression of the gene cluster that mediates the biosynthesis of cichorine, a phytotoxin active against knapweed, corn, and soybeans. The sequence is that of Transcription factor cicD from Emericella nidulans (strain FGSC A4 / ATCC 38163 / CBS 112.46 / NRRL 194 / M139) (Aspergillus nidulans).